We begin with the raw amino-acid sequence, 1645 residues long: MAQKPNFLKKIISAGLVTASTATIVAGFSGVAMGAVMQYNRTTNAAATTVDGAGFDQTGAGVNLPVATNSVITANSNNAITFNTPNGNLNSLFLDTANTLAVTINENTTLGFVTNVTKQGNFFNFTIGAGKSLTITGHGITAQQAATTKSAQNVVSKVNAGAAINDNDLSGVGSIDFTAAPSVLEFNLINPTTQEAPLTLGDNAKIVNGANGILNITNGFVKVSDKTFAGIKTINIGDNQGLMFNTTPDAANALNLQGGGNTINFNGRDGTGKLVLVSKNGNATEFNVTGSLGGNLKGVIEFDTTAAAGKLIANGGAANAVIGTDNGAGRAAGFIVSVDNGNAATISGQVYAKDIVIQSANAGGQVTFEHLVDVGLGGKTNFKTADSKVIITENASFGSTDFGNLAVQIVVPNNKILTGNFIGDAKNNGNTAGVITFNANGTLVSGNTDPNIVVTNIKAIEVEGAGIVQLSGIHGAELRLGNAGSIFKLADGTVINGPVNQNPLVNNNALAAGSIQLDGSAIITGDIGNGAVNAALQDITLANDASKILTLSGANIIGANAGGAIHFQANGGTIQLTSTQNNILVDFDLDVTTDQTGVVDASSLTNNQTLTINGSIGTIGANTKTLGRFNVGSSKTILNAGDVAINELVMENDGSVHLTHNTYLITKTINAANQGKIIVAADPINTDTALADGTNLGSAESPLSNIHFATKAANGDSILHIGKGVNLYANNITTTDANVGSLHFRSGGTSIVSGTVGGQQGLKLNNLILDNGTTVKFLGDITFNGGTKIEGKSILQISSNYITDHIESADNTGTLEFVNTDPITVTLNKQGAYFGVLKQVMVSGPGNIAFNEIGNGVAHAIAVDSISFENASLGASLFLLSGTPLDVLTIKSTVGNGTVDNFNAPILVVSGIDSMINNGQVIGDQKNIIALSLGSDNSITVNSNTLYAGIRTTKTNQGTVTLSGGIPNNPGTIYGLGLENGDPKLKQVTFTTDYNNLGSIIATNVTINDDVTLTTGGIAGTDFDGKITLGSINGNANVKFVDRTFSHPTSMIVSTKANQGTVTYLGNALVGNIGSSDIPVASVRFTGNDSGVGLQGNIHSQNIDFGTYNLTILNSDVILGGGTTAINGEIDLLTNNLIFANGTSTWGNNTSLSTTLNVSNGNVGQIVIAEGAQVNATTTGTTTIKIQDNANANFSGTQTYTLIQGGARFNGTLGAPNFDVTGNNIFVKYELIRDANQDYVLTRTNDVLNVVTTAVGNSAIANAPGVHQNIAICLESTDTAAYNNMLLAKDSSDVATFIGAIATDTGAAVATVNLNDTQKTQDLLGNRLGALRYLSNSETADVGGSETGAVSSGDEAIDQVSYGVWAKPFYNIAEQDKKGGLAGYKAKTAGVVVGLDTLANDNLMIGAAIGITKTDIKHQDYKKGDKTDIKGLSFSLYGAQQLVKNFFAQGSAIFTLNKVKSKSQRYFFDANGKMNKQIAAGNYDNITFGGNLMFGYDYNALQGVLVTPMAGLSYLKSSNENYKETGTTVANKRIHSKFSDRIDLIVGAKVTGSAMNINDIVIYPEIHSFVVHKVNGKLSKAQSMLDGQTAPFISQPDRTAKTSYNIGLSANIRSDAKMEYGIGYDFNAASKYTAHQGTLKVRINF.

The propeptide occupies 1329-1352 (GALRYLSNSETADVGGSETGAVSS). The Autotransporter domain occupies 1357 to 1645 (IDQVSYGVWA…QGTLKVRINF (289 aa)).

It belongs to the rickettsiae OmpA/OmpB family.

It localises to the periplasm. The protein resides in the secreted. Its subcellular location is the cell surface. The protein localises to the cell outer membrane. In terms of biological role, the 120 kDa surface-exposed protein is a major structural protein which may play a role as a rickettsial virulence factor and/or immunogen during infection. Its function is as follows. The 32 kDa beta peptide may serve as a membrane anchor. The protein is Outer membrane protein B (ompB) of Rickettsia typhi (strain ATCC VR-144 / Wilmington).